A 797-amino-acid polypeptide reads, in one-letter code: Short transient receptor potential channel 4-associated protein (797 aa).

A2 is modified (N-acetylalanine). Residues 2-400 (AAAPVAAGSG…VLYVLCVLLM (399 aa)) form an interaction with TNFRSF1A region.

As to quaternary structure, component of the DCX(TRPC4AP) E3 ubiquitin ligase complex, at least composed of CUL4A, DDB1, TRPC4AP/TRUSS and RBX1. Interacts with MYC. Constitutively associated with TNFRSF1A. Directly interacts with TRADD, TRAF2, CHUK, IKBKB and IKBKG. Interacts with TRPC1, TRPC4 and TRPC5. (Microbial infection) Interacts with Hepatitis B virus (HBV) protein X; leading to prevent ubiquitination of TRPC4AP by SKP2. Phosphorylated by GSK3B; phosphorylation is required for ubiquitination. In terms of processing, ubiquitinated by a SCF (SKP1-CUL1-F-box protein) E3 ubiquitin-protein ligase containing SKP2, leading to its degradation. Phosphorylation by GSK3B is required for ubiquitination.

The protein resides in the cytoplasm. It is found in the perinuclear region. It participates in protein modification; protein ubiquitination. In terms of biological role, substrate-recognition component of a DCX (DDB1-CUL4-X-box) E3 ubiquitin-protein ligase complex required for cell cycle control. The DCX(TRPC4AP) complex specifically mediates the polyubiquitination and subsequent degradation of MYC as part of the DesCEND (destruction via C-end degrons) pathway. The DesCEND (destruction via C-end degrons) pathway recognizes a C-degron located at the extreme C terminus of target proteins, leading to their ubiquitination and degradation. The DCX(TRPC4AP) complex specifically recognizes proteins with an arginine at the minus 3 position (R-3 motif) at the C-terminus, such as MYC, leading to their ubiquitination and degradation. Also participates in the activation of NFKB1 in response to ligation of TNFRSF1A, possibly by linking TNFRSF1A to the IKK signalosome. Involved in JNK activation via its interaction with TRAF2. Also involved in elevation of endoplasmic reticulum Ca(2+) storage reduction in response to CHRM1. The sequence is that of Short transient receptor potential channel 4-associated protein from Homo sapiens (Human).